The primary structure comprises 604 residues: uncharacterized protein (604 aa).

An ABC transmembrane type-1 domain is found at 49–332 (LILVMLMVVI…LANQFNTMLS (284 aa)). Helical transmembrane passes span 50-70 (ILVMLMVVISAIFGLLGPFVI), 86-106 (LIPVLLLLLAIYIIQSLSLWF), 172-192 (VITFVGTIAVMLYMSPLLTLI), and 288-308 (IAAIGGLFALKGWISIGSIVV). One can recognise an ABC transporter domain in the interval 366-600 (IEFRDVSFGY…KGFYSDLYES (235 aa)). Residue 399-406 (GPTGAGKT) participates in ATP binding. A helical membrane pass occupies residues 510 to 530 (LISIARAVLADPVLLILDEAT).

It belongs to the ABC transporter superfamily.

It localises to the cell membrane. This is an uncharacterized protein from Bacillus subtilis (strain 168).